A 286-amino-acid chain; its full sequence is Bifunctional protein FolD (286 aa).

Residues 165–167 (GRS), Ser190, and Val231 each bind NADP(+).

It belongs to the tetrahydrofolate dehydrogenase/cyclohydrolase family. As to quaternary structure, homodimer.

It catalyses the reaction (6R)-5,10-methylene-5,6,7,8-tetrahydrofolate + NADP(+) = (6R)-5,10-methenyltetrahydrofolate + NADPH. The enzyme catalyses (6R)-5,10-methenyltetrahydrofolate + H2O = (6R)-10-formyltetrahydrofolate + H(+). It participates in one-carbon metabolism; tetrahydrofolate interconversion. Functionally, catalyzes the oxidation of 5,10-methylenetetrahydrofolate to 5,10-methenyltetrahydrofolate and then the hydrolysis of 5,10-methenyltetrahydrofolate to 10-formyltetrahydrofolate. The protein is Bifunctional protein FolD of Bacillus mycoides (strain KBAB4) (Bacillus weihenstephanensis).